Here is a 345-residue protein sequence, read N- to C-terminus: L-threonine 3-dehydrogenase (345 aa).

Cys42 is a binding site for Zn(2+). Active-site charge relay system residues include Thr44 and His47. Zn(2+) is bound by residues His67, Glu68, Cys97, Cys100, Cys103, and Cys111. Residues Ile179, Asp199, Arg204, 266–268, and 290–291 contribute to the NAD(+) site; these read LGI and IY.

The protein belongs to the zinc-containing alcohol dehydrogenase family. Homotetramer. Requires Zn(2+) as cofactor.

It localises to the cytoplasm. The catalysed reaction is L-threonine + NAD(+) = (2S)-2-amino-3-oxobutanoate + NADH + H(+). It functions in the pathway amino-acid degradation; L-threonine degradation via oxydo-reductase pathway; glycine from L-threonine: step 1/2. Catalyzes the NAD(+)-dependent oxidation of L-threonine to 2-amino-3-ketobutyrate. The chain is L-threonine 3-dehydrogenase from Rhizobium etli (strain CIAT 652).